We begin with the raw amino-acid sequence, 101 residues long: NADH-quinone oxidoreductase subunit K (101 aa).

Transmembrane regions (helical) follow at residues 4–24 (LEHY…GIFL), 30–50 (IVIL…LVAF), and 65–85 (FVLT…VTFF).

It belongs to the complex I subunit 4L family. NDH-1 is composed of 14 different subunits. Subunits NuoA, H, J, K, L, M, N constitute the membrane sector of the complex.

The protein resides in the cell inner membrane. The enzyme catalyses a quinone + NADH + 5 H(+)(in) = a quinol + NAD(+) + 4 H(+)(out). Its function is as follows. NDH-1 shuttles electrons from NADH, via FMN and iron-sulfur (Fe-S) centers, to quinones in the respiratory chain. The immediate electron acceptor for the enzyme in this species is believed to be ubiquinone. Couples the redox reaction to proton translocation (for every two electrons transferred, four hydrogen ions are translocated across the cytoplasmic membrane), and thus conserves the redox energy in a proton gradient. This Cereibacter sphaeroides (strain ATCC 17029 / ATH 2.4.9) (Rhodobacter sphaeroides) protein is NADH-quinone oxidoreductase subunit K.